We begin with the raw amino-acid sequence, 186 residues long: Large ribosomal subunit protein uL22 (186 aa).

Ser-158 is subject to Phosphoserine. Residues 159-186 (KATDDEPAKKKLSKKKLQRQKEKMLRSE) form a disordered region. The residue at position 161 (Thr-161) is a Phosphothreonine. Residues 177 to 186 (RQKEKMLRSE) are compositionally biased toward basic and acidic residues.

It belongs to the universal ribosomal protein uL22 family.

The sequence is that of Large ribosomal subunit protein uL22 (RpL17) from Drosophila melanogaster (Fruit fly).